Reading from the N-terminus, the 1516-residue chain is Myosin-52 (1516 aa).

Residues 7–62 form the Myosin N-terminal SH3-like domain; the sequence is YKGLQCWIPDEQSQWIPGSIKDCRVEGEKAFLTVQDENENETVITVKPDDLNYEGR. The Myosin motor domain occupies 73–766; that stretch reads SDADDLTDLS…VTPLLESARD (694 aa). 167–174 is a binding site for ATP; it reads GESGAGKT. An actin-binding region spans residues 647–669; it reads LVSLMSTINETNAHYIRCIKPNE. 5 IQ domains span residues 793–813, 818–838, 840–865, 866–886, and 888–917; these read RKRV…RHTE, SSNI…KEFI, TKNS…EKTK, HDAT…KHYK, and LQYY…ESTK. Residues 926-1034 adopt a coiled-coil conformation; it reads YRLESRLFEI…LKSQLKNYDM (109 aa). Phosphoserine occurs at positions 1065 and 1072. The region spanning 1163-1431 is the Dilute domain; the sequence is ERYCVHTLEY…SELSKNIVAE (269 aa).

The protein belongs to the TRAFAC class myosin-kinesin ATPase superfamily. Myosin family.

The protein localises to the cytoplasm. Functionally, involved in cell wall deposition where it has a role in the localization of mok1. The sequence is that of Myosin-52 (myo52) from Schizosaccharomyces pombe (strain 972 / ATCC 24843) (Fission yeast).